The primary structure comprises 567 residues: Diphtheria toxin (567 aa).

An N-terminal signal peptide occupies residues 1-32 (MLVRGYVVSRKLFASILIGALLGIGAPPSAHA). 2 residues coordinate NAD(+): His53 and Tyr97. Glu180 is an active-site residue. Cystine bridges form between Cys218–Cys233 and Cys493–Cys503.

As to quaternary structure, homodimer. Post-translationally, proteolytic activation by host furin cleaves the protein in two parts, Diphtheria toxin fragment A and Diphtheria toxin fragment B; which remain associated via a disulfide bond.

The enzyme catalyses diphthamide-[translation elongation factor 2] + NAD(+) = N-(ADP-D-ribosyl)diphthamide-[translation elongation factor 2] + nicotinamide + H(+). Its activity is regulated as follows. Partially inhibited by 1,8-naphthalimide (NAP). Its function is as follows. Diphtheria toxin, produced by a phage infecting Corynebacterium diphtheriae, is a proenzyme that, after activation, catalyzes the covalent attachment of the ADP ribose moiety of NAD to eukaryotic elongation factor 2 (eEF-2). Fragment A is the catalytic portion responsible for enzymatic ADP-ribosylation of elongation factor 2, while fragment B is responsible for binding of toxin to cell receptors and entry of fragment A. The protein is Diphtheria toxin of Corynebacterium diphtheriae.